The primary structure comprises 330 residues: Aspartate--ammonia ligase (330 aa).

It belongs to the class-II aminoacyl-tRNA synthetase family. AsnA subfamily.

The protein resides in the cytoplasm. It catalyses the reaction L-aspartate + NH4(+) + ATP = L-asparagine + AMP + diphosphate + H(+). The protein operates within amino-acid biosynthesis; L-asparagine biosynthesis; L-asparagine from L-aspartate (ammonia route): step 1/1. The protein is Aspartate--ammonia ligase of Streptococcus equi subsp. equi (strain 4047).